The primary structure comprises 97 residues: Co-chaperonin GroES (97 aa).

It belongs to the GroES chaperonin family. As to quaternary structure, heptamer of 7 subunits arranged in a ring. Interacts with the chaperonin GroEL.

Its subcellular location is the cytoplasm. Together with the chaperonin GroEL, plays an essential role in assisting protein folding. The GroEL-GroES system forms a nano-cage that allows encapsulation of the non-native substrate proteins and provides a physical environment optimized to promote and accelerate protein folding. GroES binds to the apical surface of the GroEL ring, thereby capping the opening of the GroEL channel. The protein is Co-chaperonin GroES of Buchnera aphidicola subsp. Geoica urticularia.